A 305-amino-acid chain; its full sequence is UPF0450 protein C17orf58 homolog (305 aa).

The signal sequence occupies residues 1–22; sequence MTARALWLLCLIVGWSPEAPVA. Residues 18 to 160 are disordered; the sequence is EAPVAERKAP…DREPETQSCA (143 aa). Positions 21–39 are enriched in basic and acidic residues; sequence VAERKAPPPHRKPDSRETP. Disulfide bonds link Cys-159-Cys-233, Cys-163-Cys-237, and Cys-174-Cys-304. In terms of domain architecture, NTR spans 159 to 304; sequence CARACSADAD…QVRGATHTQC (146 aa).

It belongs to the UPF0450 family.

In Mus musculus (Mouse), this protein is UPF0450 protein C17orf58 homolog.